Reading from the N-terminus, the 156-residue chain is Myosin regulatory light chain, striated adductor muscle (156 aa).

Position 1 is a blocked amino end (Ala) (Ala-1). 2 consecutive EF-hand domains span residues 15 to 50 (KQIQEMKEAFSMIDVDRDGFVNKDDLKAISEQLGRT) and 84 to 119 (DTEETLRNAFAMFDELDTKKLNIEYIKDLLENMGDN). Asp-28, Asp-30, Asp-32, and Asp-39 together coordinate Ca(2+).

Its function is as follows. In molluscan muscle, calcium regulation is associated with myosin rather than with actin. Muscle myosin contains two types of light chains: the catalytic light chain, essential for ATPase activity, and the regulatory light chain, a calcium-binding protein responsible for Ca(2+) dependent binding and Ca(2+) dependent Mg-ATPase activity. In Mizuhopecten yessoensis (Japanese scallop), this protein is Myosin regulatory light chain, striated adductor muscle.